Consider the following 457-residue polypeptide: Hydrogenobyrinate a,c-diamide synthase (457 aa).

Residues 255-441 enclose the GATase cobBQ-type domain; that stretch reads TVAIAAGRAF…LHTHPAATPG (187 aa). Residue C337 is the Nucleophile of the active site.

The protein belongs to the CobB/CbiA family. Mg(2+) serves as cofactor.

It catalyses the reaction hydrogenobyrinate + 2 L-glutamine + 2 ATP + 2 H2O = hydrogenobyrinate a,c-diamide + 2 L-glutamate + 2 ADP + 2 phosphate + 2 H(+). It participates in cofactor biosynthesis; adenosylcobalamin biosynthesis; cob(II)yrinate a,c-diamide from precorrin-2 (aerobic route): step 9/10. In terms of biological role, catalyzes the ATP-dependent amidation of the two carboxylate groups at positions a and c of hydrogenobyrinate, using either L-glutamine or ammonia as the nitrogen source. This is Hydrogenobyrinate a,c-diamide synthase from Mycobacterium bovis (strain ATCC BAA-935 / AF2122/97).